The following is a 259-amino-acid chain: Sesquipedalian-2 (259 aa).

The PH domain maps to 17–121 (PADHMGFLRT…WVKVLSRASF (105 aa)). The stretch at 124–149 (MRLVVRELESQLQDARQSLALQRRSS) forms a coiled coil. The F&amp;H motif lies at 223–235 (CFSTLHDWYGQEI).

This sequence belongs to the sesquipedalian family. Forms homodimers and heterodimers with PHETA1. Interacts with OCRL and INPP5B.

It localises to the early endosome. Its subcellular location is the recycling endosome. The protein resides in the golgi apparatus. It is found in the trans-Golgi network. The protein localises to the cytoplasmic vesicle. It localises to the clathrin-coated vesicle. Functionally, plays a role in endocytic trafficking. Required for receptor recycling from endosomes, both to the trans-Golgi network and the plasma membrane. This Homo sapiens (Human) protein is Sesquipedalian-2.